The following is a 111-amino-acid chain: Probable U2 small nuclear ribonucleoprotein B'' (111 aa).

Residues 4 to 83 (NTLYVNNLND…KEMKIQYAHS (80 aa)) form the RRM domain.

Belongs to the 40S cdc5-associated complex (or cwf complex), a spliceosome sub-complex reminiscent of a late-stage spliceosome composed of the U2, U5 and U6 snRNAs and at least brr2, cdc5, cwf2/prp3, cwf3/syf1, cwf4/syf3, cwf5/ecm2, spp42/cwf6, cwf7/spf27, cwf8, cwf9, cwf10, cwf11, cwf12, prp45/cwf13, cwf14, cwf15, cwf16, cwf17, cwf18, cwf19, cwf20, cwf21, cwf22, cwf23, cwf24, cwf25, cwf26, cyp7/cwf27, cwf28, cwf29/ist3, lea1, msl1, prp5/cwf1, prp10, prp12/sap130, prp17, prp22, sap61, sap62, sap114, sap145, slu7, smb1, smd1, smd3, smf1, smg1 and syf2.

The protein resides in the nucleus. In terms of biological role, involved in pre-mRNA splicing. This protein is associated with snRNP U2. It binds stem loop IV of U2 snRNA. In Schizosaccharomyces pombe (strain 972 / ATCC 24843) (Fission yeast), this protein is Probable U2 small nuclear ribonucleoprotein B'' (msl1).